A 371-amino-acid chain; its full sequence is RNA polymerase sigma factor SigA (371 aa).

A sigma-70 factor domain-2 region spans residues leucine 137 to threonine 207. The Interaction with polymerase core subunit RpoC motif lies at aspartate 161–glutamine 164. A sigma-70 factor domain-3 region spans residues glutamate 216 to tyrosine 292. Residues valine 305–histidine 358 are sigma-70 factor domain-4. Residues leucine 331–alanine 350 constitute a DNA-binding region (H-T-H motif).

It belongs to the sigma-70 factor family. RpoD/SigA subfamily. In terms of assembly, interacts transiently with the RNA polymerase catalytic core.

The protein resides in the cytoplasm. Functionally, sigma factors are initiation factors that promote the attachment of RNA polymerase to specific initiation sites and are then released. This sigma factor is the primary sigma factor during exponential growth. The protein is RNA polymerase sigma factor SigA of Streptococcus mutans serotype c (strain ATCC 700610 / UA159).